An 85-amino-acid polypeptide reads, in one-letter code: ATP synthase subunit c (85 aa).

The next 2 membrane-spanning stretches (helical) occupy residues 10-30 and 53-73; these read IAVA…FGLL and FIVA…ALFF.

This sequence belongs to the ATPase C chain family. F-type ATPases have 2 components, F(1) - the catalytic core - and F(0) - the membrane proton channel. F(1) has five subunits: alpha(3), beta(3), gamma(1), delta(1), epsilon(1). F(0) has three main subunits: a(1), b(2) and c(10-14). The alpha and beta chains form an alternating ring which encloses part of the gamma chain. F(1) is attached to F(0) by a central stalk formed by the gamma and epsilon chains, while a peripheral stalk is formed by the delta and b chains.

The protein localises to the cell inner membrane. In terms of biological role, f(1)F(0) ATP synthase produces ATP from ADP in the presence of a proton or sodium gradient. F-type ATPases consist of two structural domains, F(1) containing the extramembraneous catalytic core and F(0) containing the membrane proton channel, linked together by a central stalk and a peripheral stalk. During catalysis, ATP synthesis in the catalytic domain of F(1) is coupled via a rotary mechanism of the central stalk subunits to proton translocation. Functionally, key component of the F(0) channel; it plays a direct role in translocation across the membrane. A homomeric c-ring of between 10-14 subunits forms the central stalk rotor element with the F(1) delta and epsilon subunits. In Pseudomonas syringae pv. syringae (strain B728a), this protein is ATP synthase subunit c.